The sequence spans 389 residues: Aromatic-amino-acid aminotransferase 2 (389 aa).

At Lys233 the chain carries N6-(pyridoxal phosphate)lysine.

This sequence belongs to the class-I pyridoxal-phosphate-dependent aminotransferase family. Homodimer. Requires pyridoxal 5'-phosphate as cofactor.

It catalyses the reaction an aromatic L-alpha-amino acid + 2-oxoglutarate = an aromatic oxo-acid + L-glutamate. In terms of biological role, catalyzes the transamination of phenylalanine, tyrosine and tryptophan. Shows virtually no activity towards aspartic acid, alanine, valine or isoleucine. The protein is Aromatic-amino-acid aminotransferase 2 of Thermococcus litoralis (strain ATCC 51850 / DSM 5473 / JCM 8560 / NS-C).